The following is a 509-amino-acid chain: Zinc finger protein CKR1 (509 aa).

The region spanning methionine 1–proline 61 is the KRAB domain. 2 stretches are compositionally biased toward basic and acidic residues: residues glutamate 41 to alanine 50 and proline 98 to proline 112. The interval glutamate 41–glycine 114 is disordered. 11 consecutive C2H2-type zinc fingers follow at residues phenylalanine 113 to histidine 135, tyrosine 141 to histidine 163, histidine 169 to histidine 191, histidine 197 to histidine 219, tyrosine 225 to histidine 247, glutamine 279 to histidine 303, histidine 303 to histidine 325, phenylalanine 331 to histidine 353, tyrosine 359 to alanine 383, phenylalanine 387 to histidine 409, and tyrosine 415 to histidine 437. A disordered region spans residues serine 428–glutamate 479.

The protein belongs to the krueppel C2H2-type zinc-finger protein family.

Its subcellular location is the nucleus. This chain is Zinc finger protein CKR1, found in Gallus gallus (Chicken).